We begin with the raw amino-acid sequence, 361 residues long: Small ribosomal subunit protein mS46 (361 aa).

Residues 1 to 14 constitute a mitochondrion transit peptide; sequence MRSSMFRCVSRAHY. The segment at 37–99 is disordered; sequence ASSNALKLDK…SDSVRANKQQ (63 aa). Over residues 43 to 52 the composition is skewed to basic and acidic residues; sequence KLDKMKEGRM. Low complexity predominate over residues 59–68; the sequence is GNQNRNSMNN. The span at 69–91 shows a compositional bias: basic and acidic residues; sequence KESRGREGNQGERNMRLKNRSSD.

Belongs to the mitochondrion-specific ribosomal protein mS46 family. As to quaternary structure, component of the mitochondrial small ribosomal subunit (mt-SSU). Mature yeast 74S mitochondrial ribosomes consist of a small (37S) and a large (54S) subunit. The 37S small subunit contains a 15S ribosomal RNA (15S mt-rRNA) and 34 different proteins. The 54S large subunit contains a 21S rRNA (21S mt-rRNA) and 46 different proteins.

It localises to the mitochondrion. In terms of biological role, component of the mitochondrial ribosome (mitoribosome), a dedicated translation machinery responsible for the synthesis of mitochondrial genome-encoded proteins, including at least some of the essential transmembrane subunits of the mitochondrial respiratory chain. The mitoribosomes are attached to the mitochondrial inner membrane and translation products are cotranslationally integrated into the membrane. This Saccharomyces cerevisiae (strain ATCC 204508 / S288c) (Baker's yeast) protein is Small ribosomal subunit protein mS46 (RSM28).